The following is an 833-amino-acid chain: G-type lectin S-receptor-like serine/threonine-protein kinase RKS1 (833 aa).

The signal sequence occupies residues 1–18 (MKVVFVIFFFFLFQFCIS). A Bulb-type lectin domain is found at 19 to 144 (VDTIMRRQSL…VTGRSFWESF (126 aa)). Residues 19–440 (VDTIMRRQSL…NGLSGKRRVL (422 aa)) lie on the Extracellular side of the membrane. 6 N-linked (GlcNAc...) asparagine glycosylation sites follow: Asn-79, Asn-92, Asn-100, Asn-109, Asn-228, and Asn-256. An EGF-like domain is found at 280 to 330 (PKEQCDNYAHCGPNGYCDSPSSKTFECTCLPGFEPKFPRHWFLRDSSGGCT). Cystine bridges form between Cys-284–Cys-296, Cys-290–Cys-306, and Cys-308–Cys-329. Positions 338–421 (CSEKDGFVKL…SGQDFYIRVD (84 aa)) constitute a PAN domain. Residues Asn-363 and Asn-376 are each glycosylated (N-linked (GlcNAc...) asparagine). Intrachain disulfides connect Cys-369-Cys-396 and Cys-373-Cys-379. The helical transmembrane segment at 441–461 (LILISLIAAVMLLTVILFCVV) threads the bilayer. The Cytoplasmic portion of the chain corresponds to 462–833 (RERRKSNRHR…DVTFSDIQGR (372 aa)). In terms of domain architecture, Protein kinase spans 515–800 (FSSQNKLGAG…NLPNPKHPAF (286 aa)). Residues 521 to 529 (LGAGGFGPV) and Lys-543 each bind ATP. 2 positions are modified to phosphoserine: Ser-549 and Ser-564. Positions 604–621 (EQRAELDWPKRMEIVRGI) are caM-binding. Asp-640 (proton acceptor) is an active-site residue. A phosphoserine mark is found at Ser-644 and Ser-657. The residue at position 674 (Thr-674) is a Phosphothreonine. 2 positions are modified to phosphoserine: Ser-717 and Ser-821.

Belongs to the protein kinase superfamily. Ser/Thr protein kinase family.

It localises to the cell membrane. It catalyses the reaction L-seryl-[protein] + ATP = O-phospho-L-seryl-[protein] + ADP + H(+). The catalysed reaction is L-threonyl-[protein] + ATP = O-phospho-L-threonyl-[protein] + ADP + H(+). This Arabidopsis thaliana (Mouse-ear cress) protein is G-type lectin S-receptor-like serine/threonine-protein kinase RKS1 (RKS1).